The chain runs to 776 residues: Protein translocase subunit SecA 2 (776 aa).

Residues Gln-80, Gly-98–Thr-102, and Asp-486 contribute to the ATP site.

This sequence belongs to the SecA family. As to quaternary structure, monomer and homodimer. Part of the essential Sec protein translocation apparatus which comprises SecA, SecYEG and auxiliary proteins SecDF. Other proteins may also be involved.

It is found in the cell membrane. The protein localises to the cytoplasm. It carries out the reaction ATP + H2O + cellular proteinSide 1 = ADP + phosphate + cellular proteinSide 2.. Its function is as follows. Part of the Sec protein translocase complex. Interacts with the SecYEG preprotein conducting channel. Has a central role in coupling the hydrolysis of ATP to the transfer of proteins into and across the cell membrane, serving as an ATP-driven molecular motor driving the stepwise translocation of polypeptide chains across the membrane. The polypeptide is Protein translocase subunit SecA 2 (Listeria monocytogenes serotype 4b (strain F2365)).